We begin with the raw amino-acid sequence, 689 residues long: Methionine--tRNA ligase (689 aa).

Positions 15–25 (PYANGPIHLGH) match the 'HIGH' region motif. Zn(2+) contacts are provided by Cys146, Cys149, Cys159, and Cys162. Positions 332-336 (KMSKS) match the 'KMSKS' region motif. Position 335 (Lys335) interacts with ATP. The segment at 546-577 (KDNLQPTEAPKADKKADKKVEKKATTGDPLTD) is disordered. The span at 555 to 570 (PKADKKADKKVEKKAT) shows a compositional bias: basic and acidic residues. The 102-residue stretch at 588–689 (DFAKLDLRIA…QGAKPGMRVK (102 aa)) folds into the tRNA-binding domain.

The protein belongs to the class-I aminoacyl-tRNA synthetase family. MetG type 1 subfamily. In terms of assembly, homodimer. It depends on Zn(2+) as a cofactor.

It localises to the cytoplasm. The enzyme catalyses tRNA(Met) + L-methionine + ATP = L-methionyl-tRNA(Met) + AMP + diphosphate. In terms of biological role, is required not only for elongation of protein synthesis but also for the initiation of all mRNA translation through initiator tRNA(fMet) aminoacylation. In Shewanella denitrificans (strain OS217 / ATCC BAA-1090 / DSM 15013), this protein is Methionine--tRNA ligase.